We begin with the raw amino-acid sequence, 478 residues long: Adenosylhomocysteinase (478 aa).

3 residues coordinate substrate: T57, D139, and E201. NAD(+) is bound at residue 202–204 (TTT). Positions 231 and 235 each coordinate substrate. Residues N236, 265 to 270 (GYGDVG), E288, N323, 344 to 346 (IGH), and N392 contribute to the NAD(+) site.

This sequence belongs to the adenosylhomocysteinase family. The cofactor is NAD(+).

The protein resides in the cytoplasm. The enzyme catalyses S-adenosyl-L-homocysteine + H2O = L-homocysteine + adenosine. It participates in amino-acid biosynthesis; L-homocysteine biosynthesis; L-homocysteine from S-adenosyl-L-homocysteine: step 1/1. Functionally, may play a key role in the regulation of the intracellular concentration of adenosylhomocysteine. This is Adenosylhomocysteinase from Corynebacterium efficiens (strain DSM 44549 / YS-314 / AJ 12310 / JCM 11189 / NBRC 100395).